Reading from the N-terminus, the 92-residue chain is Small ribosomal subunit protein uS19 (92 aa).

The protein belongs to the universal ribosomal protein uS19 family.

In terms of biological role, protein S19 forms a complex with S13 that binds strongly to the 16S ribosomal RNA. The sequence is that of Small ribosomal subunit protein uS19 from Neisseria gonorrhoeae (strain ATCC 700825 / FA 1090).